A 145-amino-acid polypeptide reads, in one-letter code: Major pollen allergen Ole e 1 (145 aa).

3 cysteine pairs are disulfide-bonded: Cys-19/Cys-90, Cys-22/Cys-131, and Cys-43/Cys-78. N-linked (GlcNAc...) (complex) asparagine; alternate glycosylation is present at Asn-111. Asn-111 carries an N-linked (GlcNAc...) (high mannose) asparagine; alternate glycan.

The protein belongs to the Ole e I family. In terms of processing, N-glycosylated; contains high mannose (Man(7)-GlcNAc) and partially fucosylated complex glycans (GlcNAc-Man(3)-Xyl-GlcNAc). Complex glycans may contribute to the antigenicity. Exists both in a glycosylated and in a non-glycosylated form. Ole e 1 and Ole e 1.0103 are the only non-glycosylated isoallergens. A second potential glycosylation site exists at position 50 in cv. Bella de Espana and cv. Hojiblanca. As to expression, expressed in tapetum and pollen grains. Not detected in petals, roots or leaves.

It localises to the endoplasmic reticulum. It is found in the secreted. In terms of biological role, may be involved in recognition between pollen-stigma and pollen tube-style cells. The chain is Major pollen allergen Ole e 1 from Olea europaea (Common olive).